A 613-amino-acid polypeptide reads, in one-letter code: Na(+)/H(+) antiporter NhaA 1 (613 aa).

Positions 1 to 24 are disordered; it reads MTEASARTIGPLPSRFSRDPKTPR. The tract at residues 1–408 is na(+)/H(+) antiporter NhaA; the sequence is MTEASARTIG…DPARQDEARV (408 aa). 11 helical membrane passes run 29–49, 81–101, 110–130, 138–158, 168–188, 191–211, 231–251, 300–320, 337–357, 377–397, and 408–428; these read AAAALLLAFTVLAILWANSPW, GLMAFFFFIVGLEVKSEFVIG, AVPVVAAIAGLIVPAVIFLTF, QAWGVVISTDTAFLVGALAVI, IFLLTLAVVDDVGALGAIALF, DDLKLAPLAVAALLIAALAMV, IALYLAHVHPTLAGVAVAVLI, AVGPYVSFVVLPIFALANAGV, WGIVAGLVVGKFVGITAATAL, GGAALSGIGFTISLFIVDVAI, and VGVLIASVLAFTLSWALFRIT. A Thioredoxin domain is found at 409-613; the sequence is GVLIASVLAF…SLIRALEAGR (205 aa).

The protein in the N-terminal section; belongs to the NhaA Na(+)/H(+) (TC 2.A.33) antiporter family.

It is found in the cell membrane. The enzyme catalyses Na(+)(in) + 2 H(+)(out) = Na(+)(out) + 2 H(+)(in). Its function is as follows. Na(+)/H(+) antiporter that extrudes sodium in exchange for external protons. The polypeptide is Na(+)/H(+) antiporter NhaA 1 (Mycobacterium sp. (strain JLS)).